The sequence spans 209 residues: Small ribosomal subunit protein uS4 (209 aa).

The 64-residue stretch at 99-162 (RRLDNMVYRL…RKNNKIIEAM (64 aa)) folds into the S4 RNA-binding domain.

The protein belongs to the universal ribosomal protein uS4 family. Part of the 30S ribosomal subunit. Contacts protein S5. The interaction surface between S4 and S5 is involved in control of translational fidelity.

Functionally, one of the primary rRNA binding proteins, it binds directly to 16S rRNA where it nucleates assembly of the body of the 30S subunit. Its function is as follows. With S5 and S12 plays an important role in translational accuracy. The sequence is that of Small ribosomal subunit protein uS4 from Syntrophus aciditrophicus (strain SB).